The primary structure comprises 173 residues: Crossover junction endodeoxyribonuclease RuvC (173 aa).

Catalysis depends on residues aspartate 8, glutamate 67, and aspartate 139. Mg(2+) contacts are provided by aspartate 8, glutamate 67, and aspartate 139.

Belongs to the RuvC family. In terms of assembly, homodimer which binds Holliday junction (HJ) DNA. The HJ becomes 2-fold symmetrical on binding to RuvC with unstacked arms; it has a different conformation from HJ DNA in complex with RuvA. In the full resolvosome a probable DNA-RuvA(4)-RuvB(12)-RuvC(2) complex forms which resolves the HJ. Mg(2+) serves as cofactor.

It localises to the cytoplasm. The enzyme catalyses Endonucleolytic cleavage at a junction such as a reciprocal single-stranded crossover between two homologous DNA duplexes (Holliday junction).. Functionally, the RuvA-RuvB-RuvC complex processes Holliday junction (HJ) DNA during genetic recombination and DNA repair. Endonuclease that resolves HJ intermediates. Cleaves cruciform DNA by making single-stranded nicks across the HJ at symmetrical positions within the homologous arms, yielding a 5'-phosphate and a 3'-hydroxyl group; requires a central core of homology in the junction. The consensus cleavage sequence is 5'-(A/T)TT(C/G)-3'. Cleavage occurs on the 3'-side of the TT dinucleotide at the point of strand exchange. HJ branch migration catalyzed by RuvA-RuvB allows RuvC to scan DNA until it finds its consensus sequence, where it cleaves and resolves the cruciform DNA. This is Crossover junction endodeoxyribonuclease RuvC from Salmonella agona (strain SL483).